Consider the following 846-residue polypeptide: MGELEEKETPPTETTAAQQEALEEPKETDKMLDKKEDAKEKTPSPQTSKPASPNAGKKSSPVAEKKIDDAELAKSKSGNGEEIIDIPAENGTKPDSADDKKISKEEREVKPKKIPIGGLKLPGFFMKNKPKADGDGAEGELLEKEKEEDKDKEANGDAATGSGKDEQKSRPGLGERLRSFFARKPSAEKEKKQLVNGDADAKSEATAEATPAEDASDAPPKRGLLNAIKLPIANMIPKKKSNDDVELGLGKAGLASMETLDDSLKDQDTVDRAPVKTNGTEELKGELKDEKLAAEEKLAAEEEEQNRPVSLLTRLRGYKCSVDDALIVFGILLFVLLLGVIGYVLTHETLTSPPLREGRYIMAVTGCGPVEGVKEDGAFAFRGIPYAKPPVDRLRWKPAELIDDINMCWNDTLQTHNSSVVCTQRLGNGTTVGDEDCLYLDVVTPHVRYNNPLPVVVLIGAESLAGPSPGILRPSARYSRSHDVIFVRPNFRLGVFGFLALDALTKEAHPPTSGNYALTDIIAVLNWIKLNIVHFGGDPQSVTLLGHRAGATLVTLLVNSQKVKGLYTRAWASSGSAILPGKPLSESGKQNEQLMATLECADIQCLREASSERLWAATPDTWLHFPVDLPQPQEANASGSRHEWLVLDGDVVFEHPSDTWKREQANDKPVLVMGATAHEAHTEKLRELHANWTREEVRAYLENSQIGALGLTDEVIEKYNASSYASLVSIISDIRSVCPLLTNARQQPSVPFYVVTQGEGPDQLATVDADVQAILGRYEPHTVEQRRFVSAMQQLFYYYVSHGTVQSFVQNRRVINVGQDAQPEEDYLPCNYWISKDIVPRYARVD.

Residues 1–222 (MGELEEKETP…EDASDAPPKR (222 aa)) form a disordered region. The Cytoplasmic segment spans residues 1-324 (MGELEEKETP…LRGYKCSVDD (324 aa)). Residues 11–20 (PTETTAAQQE) are compositionally biased toward low complexity. The span at 23 to 42 (EEPKETDKMLDKKEDAKEKT) shows a compositional bias: basic and acidic residues. A Phosphothreonine; by PKC modification is found at Thr-28. Thr-42 is subject to Phosphothreonine. Ser-44 is modified (phosphoserine). The residue at position 47 (Thr-47) is a Phosphothreonine. Residues Ser-48 and Ser-52 each carry the phosphoserine modification. The segment covering 63-74 (AEKKIDDAELAK) has biased composition (basic and acidic residues). A Phosphoserine; by PKC modification is found at Ser-75. Ser-77 is modified (phosphoserine). Composition is skewed to basic and acidic residues over residues 95-111 (DSADDKKISKEEREVKP), 141-155 (LLEKEKEEDKDKEAN), 163-178 (GKDEQKSRPGLGERLR), and 185-205 (PSAEKEKKQLVNGDADAKSEA). Ser-103 is modified (phosphoserine; by PKC). Residue Ser-169 is modified to Phosphoserine; by PKC. Phosphoserine occurs at positions 186 and 203. A Phosphothreonine modification is found at Thr-206. A Phosphoserine modification is found at Ser-256. Residue Thr-259 is modified to Phosphothreonine. Ser-263 is modified (phosphoserine). Thr-269 is modified (phosphothreonine). A helical; Signal-anchor for type II membrane protein transmembrane segment spans residues 325–346 (ALIVFGILLFVLLLGVIGYVLT). Topologically, residues 347-846 (HETLTSPPLR…DIVPRYARVD (500 aa)) are extracellular. Asn-410, Asn-417, and Asn-428 each carry an N-linked (GlcNAc...) asparagine glycan. 2 cysteine pairs are disulfide-bonded: Cys-422-Cys-437 and Cys-600-Cys-605. Asn-636, Asn-691, and Asn-720 each carry an N-linked (GlcNAc...) asparagine glycan. Cys-738 and Cys-830 are joined by a disulfide.

In the C-terminal section; belongs to the type-B carboxylesterase/lipase family. As to expression, late in embryogenesis, expression is restricted to cells of the peripheral and central nervous system undergoing proliferation and differentiation. Also expressed in larval CNS, mesoderm and imaginal disks.

The protein localises to the membrane. In terms of biological role, may mediate or modulate cell adhesion between embryonic cells during development. This is Neurotactin (Nrt) from Drosophila melanogaster (Fruit fly).